Reading from the N-terminus, the 133-residue chain is Small ribosomal subunit protein uS9 (133 aa).

Basic and acidic residues predominate over residues 98–113; it reads RKPLKTEGHLSRDPRA. The disordered stretch occupies residues 98 to 133; the sequence is RKPLKTEGHLSRDPRAKERRKYGLKKARKAPQFSKR. The span at 114–133 shows a compositional bias: basic residues; the sequence is KERRKYGLKKARKAPQFSKR.

This sequence belongs to the universal ribosomal protein uS9 family.

The protein is Small ribosomal subunit protein uS9 of Synechococcus sp. (strain CC9902).